The following is a 429-amino-acid chain: Saccharopine dehydrogenase-like oxidoreductase (429 aa).

The residue at position 2 (Ala2) is an N-acetylalanine. Ser217 is modified (phosphoserine).

It belongs to the saccharopine dehydrogenase family.

The chain is Saccharopine dehydrogenase-like oxidoreductase (SCCPDH) from Bos taurus (Bovine).